We begin with the raw amino-acid sequence, 127 residues long: Aspartate 1-decarboxylase (127 aa).

Ser-25 serves as the catalytic Schiff-base intermediate with substrate; via pyruvic acid. Ser-25 bears the Pyruvic acid (Ser) mark. Thr-57 provides a ligand contact to substrate. The Proton donor role is filled by Tyr-58. Residue 73-75 coordinates substrate; it reads GAA.

Belongs to the PanD family. As to quaternary structure, heterooctamer of four alpha and four beta subunits. Pyruvate is required as a cofactor. In terms of processing, is synthesized initially as an inactive proenzyme, which is activated by self-cleavage at a specific serine bond to produce a beta-subunit with a hydroxyl group at its C-terminus and an alpha-subunit with a pyruvoyl group at its N-terminus.

It is found in the cytoplasm. It catalyses the reaction L-aspartate + H(+) = beta-alanine + CO2. It participates in cofactor biosynthesis; (R)-pantothenate biosynthesis; beta-alanine from L-aspartate: step 1/1. Its function is as follows. Catalyzes the pyruvoyl-dependent decarboxylation of aspartate to produce beta-alanine. This chain is Aspartate 1-decarboxylase, found in Bacillus cereus (strain 03BB102).